We begin with the raw amino-acid sequence, 589 residues long: Protein PAF1 homolog (589 aa).

The segment covering 1–54 has biased composition (pro residues); the sequence is MASYRPPYPPLPQPPSQNSLAPPPPPPSLPPPVPPPPPSHQPYSYPPPPPPPPH. 2 disordered regions span residues 1 to 180 and 542 to 589; these read MASY…PLLT and GVYS…DYSE. The segment covering 55–65 has biased composition (low complexity); it reads AYYQQGPHYPQ. The span at 71–87 shows a compositional bias: pro residues; sequence APPPPPPPSAPPPLVPD. Residues 88–116 show a composition bias toward basic and acidic residues; sequence PPRHQGPNDHEKGASKQVGRRERAKPDPS. Over residues 117–127 the composition is skewed to basic residues; that stretch reads KHHHRSHLPHS. Residues 126–159 adopt a coiled-coil conformation; it reads HSKKIETEEERRLRKKRELEKQRQDEKHRQQMKN. Over residues 128-154 the composition is skewed to basic and acidic residues; it reads KKIETEEERRLRKKRELEKQRQDEKHR.

It belongs to the PAF1 family. Component of the nuclear PAF1 complex (PAF1C), which consists of VIP2/ELF7/PAF1, VIP3/SKI8/WDR61, VIP4/LEO1, VIP5/RTF1, VIP6/ELF8/CTR9 and CDC73. In terms of tissue distribution, expressed in roots, leaves and shoot apex.

It is found in the nucleus. In terms of biological role, component of the PAF1 complex (PAF1C) which is involved in histone modifications such as methylation on histone H3 'Lys-4' (H3K4me3). Involved in regulation of flowering time. Required for the expression of the flowering repressors and MAD-box genes FLC, AGL27/FLM and AGL31/MAF2. Required for histone H3 trimethylation on 'Lys-4' H3K4me3 at the FLC and AGL27/FLM loci. Involved in the control of seed dormancy and germination. This chain is Protein PAF1 homolog, found in Arabidopsis thaliana (Mouse-ear cress).